The primary structure comprises 401 residues: G2/mitotic-specific cyclin-B1 (401 aa).

Disordered stretches follow at residues 1-30 (MALR…PTLK) and 84-103 (KVQV…ETSG). A compositionally biased stretch (polar residues) spans 9–26 (RLASTRAEQGGKTCSVSG).

Belongs to the cyclin family. Cyclin AB subfamily. As to quaternary structure, interacts with the CDK1 protein kinase to form a serine/threonine kinase holoenzyme complex also known as maturation promoting factor (MPF). The cyclin subunit imparts substrate specificity to the complex.

Essential for the control of the cell cycle at the G2/M (mitosis) transition. The protein is G2/mitotic-specific cyclin-B1 (ccnb1) of Oryzias javanicus (Javanese ricefish).